The sequence spans 230 residues: Somatolactin (230 aa).

Positions 1-23 (MMTAVKQSGVWAVLLWPYLLAVS) are cleaved as a signal peptide. 3 disulfides stabilise this stretch: C28–C38, C88–C204, and C221–C229. Residues N34 and N144 are each glycosylated (N-linked (GlcNAc...) asparagine).

It belongs to the somatotropin/prolactin family. As to expression, pituitary gland.

The protein localises to the secreted. This is Somatolactin from Solea senegalensis (Senegalese sole).